The following is a 290-amino-acid chain: ATP synthase gamma chain (290 aa).

This sequence belongs to the ATPase gamma chain family. As to quaternary structure, F-type ATPases have 2 components, CF(1) - the catalytic core - and CF(0) - the membrane proton channel. CF(1) has five subunits: alpha(3), beta(3), gamma(1), delta(1), epsilon(1). CF(0) has three main subunits: a, b and c.

The protein localises to the cell inner membrane. In terms of biological role, produces ATP from ADP in the presence of a proton gradient across the membrane. The gamma chain is believed to be important in regulating ATPase activity and the flow of protons through the CF(0) complex. This Anaeromyxobacter dehalogenans (strain 2CP-1 / ATCC BAA-258) protein is ATP synthase gamma chain.